Reading from the N-terminus, the 109-residue chain is Transcription initiation factor IIA subunit 2 (109 aa).

It belongs to the TFIIA subunit 2 family. TFIIA is a heterodimer of the large unprocessed subunit 1 and a small subunit gamma. It was originally believed to be a heterotrimer of an alpha (p35), a beta (p19) and a gamma subunit (p12). Interacts with NCOA6 general coactivator. TFIIA forms a complex with TBP. Interacts with HSF1 (via transactivation domain). Part of TBP-based Pol II pre-initiation complex (PIC), in which Pol II core assembles with general transcription factors and other specific initiation factors including GTF2E1, GTF2E2, GTF2F1, GTF2F2, TCEA1, ERCC2, ERCC3, GTF2H2, GTF2H3, GTF2H4, GTF2H5, GTF2A1, GTF2A2, GTF2B and TBP; this large multi-subunit PIC complex mediates DNA unwinding and targets Pol II core to the transcription start site where the first phosphodiester bond forms. In terms of assembly, (Microbial infection) Interacts with SV40 Large T antigen.

It localises to the nucleus. In terms of biological role, TFIIA is a component of the transcription machinery of RNA polymerase II and plays an important role in transcriptional activation. TFIIA in a complex with TBP mediates transcriptional activity. The polypeptide is Transcription initiation factor IIA subunit 2 (GTF2A2) (Homo sapiens (Human)).